The chain runs to 221 residues: GTP cyclohydrolase 1 (221 aa).

Zn(2+) contacts are provided by Cys-109, His-112, and Cys-180.

It belongs to the GTP cyclohydrolase I family. Toroid-shaped homodecamer, composed of two pentamers of five dimers.

The enzyme catalyses GTP + H2O = 7,8-dihydroneopterin 3'-triphosphate + formate + H(+). The protein operates within cofactor biosynthesis; 7,8-dihydroneopterin triphosphate biosynthesis; 7,8-dihydroneopterin triphosphate from GTP: step 1/1. This Blochmanniella pennsylvanica (strain BPEN) protein is GTP cyclohydrolase 1.